The following is a 101-amino-acid chain: NAD(P)H-quinone oxidoreductase subunit 4L, chloroplastic (101 aa).

The next 3 membrane-spanning stretches (helical) occupy residues 2–22, 32–52, and 61–81; these read ILEH…YGLI, MCLE…SDFF, and IFSI…LAIV.

It belongs to the complex I subunit 4L family. NDH is composed of at least 16 different subunits, 5 of which are encoded in the nucleus.

The protein localises to the plastid. Its subcellular location is the chloroplast thylakoid membrane. It catalyses the reaction a plastoquinone + NADH + (n+1) H(+)(in) = a plastoquinol + NAD(+) + n H(+)(out). The catalysed reaction is a plastoquinone + NADPH + (n+1) H(+)(in) = a plastoquinol + NADP(+) + n H(+)(out). NDH shuttles electrons from NAD(P)H:plastoquinone, via FMN and iron-sulfur (Fe-S) centers, to quinones in the photosynthetic chain and possibly in a chloroplast respiratory chain. The immediate electron acceptor for the enzyme in this species is believed to be plastoquinone. Couples the redox reaction to proton translocation, and thus conserves the redox energy in a proton gradient. This chain is NAD(P)H-quinone oxidoreductase subunit 4L, chloroplastic, found in Nicotiana sylvestris (Wood tobacco).